A 230-amino-acid polypeptide reads, in one-letter code: Biosynthetic peptidoglycan transglycosylase (230 aa).

A helical membrane pass occupies residues 10 to 30 (IFLFFIAVIFVYQFWIFSQIV).

Belongs to the glycosyltransferase 51 family.

Its subcellular location is the cell inner membrane. The enzyme catalyses [GlcNAc-(1-&gt;4)-Mur2Ac(oyl-L-Ala-gamma-D-Glu-L-Lys-D-Ala-D-Ala)](n)-di-trans,octa-cis-undecaprenyl diphosphate + beta-D-GlcNAc-(1-&gt;4)-Mur2Ac(oyl-L-Ala-gamma-D-Glu-L-Lys-D-Ala-D-Ala)-di-trans,octa-cis-undecaprenyl diphosphate = [GlcNAc-(1-&gt;4)-Mur2Ac(oyl-L-Ala-gamma-D-Glu-L-Lys-D-Ala-D-Ala)](n+1)-di-trans,octa-cis-undecaprenyl diphosphate + di-trans,octa-cis-undecaprenyl diphosphate + H(+). It functions in the pathway cell wall biogenesis; peptidoglycan biosynthesis. Functionally, peptidoglycan polymerase that catalyzes glycan chain elongation from lipid-linked precursors. In Nitrosospira multiformis (strain ATCC 25196 / NCIMB 11849 / C 71), this protein is Biosynthetic peptidoglycan transglycosylase.